The primary structure comprises 633 residues: Carbon catabolite-derepressing protein kinase (633 aa).

Residues M1 to S16 show a composition bias toward low complexity. The disordered stretch occupies residues M1–L46. Residues S17 to H32 show a composition bias toward basic residues. The Protein kinase domain maps to Y55–F306. ATP is bound by residues L61–V69 and K84. D177 acts as the Proton acceptor in catalysis. T210 carries the post-translational modification Phosphothreonine; by autocatalysis. Positions Y313–L392 are auto-inhibitory domain (AID). A disordered region spans residues P317–D345. A compositionally biased stretch (basic and acidic residues) spans L319 to S337. The 42-residue stretch at L348–N389 folds into the UBA domain. The tract at residues F409 to A434 is disordered. S413 carries the phosphoserine modification. Residue K461 forms a Glycyl lysine isopeptide (Lys-Gly) (interchain with G-Cter in ubiquitin) linkage. S487 is modified (phosphoserine). K549 participates in a covalent cross-link: Glycyl lysine isopeptide (Lys-Gly) (interchain with G-Cter in SUMO). S632 carries the phosphoserine modification.

The protein belongs to the protein kinase superfamily. CAMK Ser/Thr protein kinase family. SNF1 subfamily. As to quaternary structure, component of the AMP-activated protein kinase complex also known as the SNF1 kinase complex (Snf1c), a heterotrimeric complex composed of an alpha subunit (SNF1), a regulatory subunit beta (GAL83 and substoichiometric alternate beta subunits SIP1 and SIP2), and a regulatory subunit gamma (SNF4). Interacts with the transcriptional activator SIP4. Interacts with SAK1. Interacts with CTK1: Interacts with adenylate cyclase CYR1. Phosphorylation at Thr-210 in response to glucose limitation leads to activation of kinase activity. ADP, but not AMP, protects the enzyme from dephosphorylation at Thr-210 by GLC7. In terms of processing, sumoylation by the SUMO (E3) ligase MMS21 leads to inhibition by interaction of SUMO attached to Lys-549 with a SUMO-interacting sequence motif located near the active site of SNF1, and by targeting SNF1 for glucose-induced destruction via the SLX5-SLX8 (SUMO-directed) ubiquitin ligase.

The protein resides in the cytoplasm. It localises to the nucleus. The protein localises to the nucleus membrane. It catalyses the reaction L-seryl-[protein] + ATP = O-phospho-L-seryl-[protein] + ADP + H(+). The enzyme catalyses L-threonyl-[protein] + ATP = O-phospho-L-threonyl-[protein] + ADP + H(+). Its activity is regulated as follows. The kinase activity is positively regulated by SNF4 via sequestration of the SNF1 auto-inhibitory domain (AID). In terms of biological role, serine/threonine protein kinase essential for release from glucose repression. Catalytic subunit of the AMP-activated protein kinase complex also known as the SNF1 kinase complex (Snf1c), a central regulator of cellular energy homeostasis, which, in response to a fall in intracellular ATP levels, activates energy-producing pathways and inhibits energy-consuming processes. The complex phosphorylates histone H3 to form H3S10ph, which promotes H3K14ac formation, leading to transcriptional activation through TBP recruitment to the promoters. The complex also negatively regulates the HOG1 MAPK pathway in ER stress response including unfolded protein response (UPR). Under nutrient/energy depletion, the complex phosphorylates and activates PAS kinase PSK1 which in turn activates PBS1, leading to the inhibition of the TORC1 signaling pathway. SNF1 also interacts and phosphorylates adenylate cyclase CYR1 and negatively regulates the protein kinase A signaling pathway. Also phosphorylates and regulates the transcriptional activator CAT8. The protein is Carbon catabolite-derepressing protein kinase of Saccharomyces cerevisiae (strain ATCC 204508 / S288c) (Baker's yeast).